Here is a 179-residue protein sequence, read N- to C-terminus: MDNDVKLGRFISLILRHKPETINLKLDKNGWANTKELIEKISKSGREIDFEILERIVNENNKKRYSFNEDKTKIRAVQGHSIEVNLELKEVVPPAILYHGTAFKTLESIKKEGIKKMSRQHVHLSADIETAKNVATRHSGKYIILEIDTEAMLKENYKFYLSENKVWLTDFVPSKFIKF.

This sequence belongs to the KptA/TPT1 family.

Its function is as follows. Removes the 2'-phosphate from RNA via an intermediate in which the phosphate is ADP-ribosylated by NAD followed by a presumed transesterification to release the RNA and generate ADP-ribose 1''-2''-cyclic phosphate (APPR&gt;P). May function as an ADP-ribosylase. This Fusobacterium nucleatum subsp. nucleatum (strain ATCC 25586 / DSM 15643 / BCRC 10681 / CIP 101130 / JCM 8532 / KCTC 2640 / LMG 13131 / VPI 4355) protein is Probable RNA 2'-phosphotransferase.